Here is a 230-residue protein sequence, read N- to C-terminus: Small ribosomal subunit protein uS2 (230 aa).

It belongs to the universal ribosomal protein uS2 family.

This Prochlorococcus marinus (strain NATL2A) protein is Small ribosomal subunit protein uS2.